Consider the following 751-residue polypeptide: Catalase-peroxidase 1 (751 aa).

Basic and acidic residues predominate over residues 1–11 (MTDKQHTRSVS). The disordered stretch occupies residues 1–31 (MTDKQHTRSVSESENPAIPSPTPKVSRPRRN). The segment at residues 103–225 (WHAAGTYRIA…LANVQMGLIY (123 aa)) is a cross-link (tryptophyl-tyrosyl-methioninium (Trp-Tyr) (with M-251)). The active-site Proton acceptor is the His104. Residues 225-251 (YVNPEGPGGNPDPLAAARDIRETFARM) constitute a cross-link (tryptophyl-tyrosyl-methioninium (Tyr-Met) (with W-103)). Residue His266 coordinates heme b. A disordered region spans residues 345-375 (AGAKQWKPKNPEANDTVPDAHGASRRHSPTM).

Belongs to the peroxidase family. Peroxidase/catalase subfamily. As to quaternary structure, homodimer or homotetramer. Heme b is required as a cofactor. In terms of processing, formation of the three residue Trp-Tyr-Met cross-link is important for the catalase, but not the peroxidase activity of the enzyme.

The enzyme catalyses H2O2 + AH2 = A + 2 H2O. It catalyses the reaction 2 H2O2 = O2 + 2 H2O. In terms of biological role, bifunctional enzyme with both catalase and broad-spectrum peroxidase activity. The protein is Catalase-peroxidase 1 of Cupriavidus pinatubonensis (strain JMP 134 / LMG 1197) (Cupriavidus necator (strain JMP 134)).